Reading from the N-terminus, the 539-residue chain is MNRRNLLKASMALAAYGSVSASGLYAARALAAAADGEIEHFDFAELQAHAKKLAGKGYVSNKQVLPPVLADMTPLQFNAIRYDPNHSLWKDVHGQLDVHFFHVGMGFKTPVRMYSVDPQNKQAREVHFRHDLFNYESSGIDKNLVKGDLGFAGFKLFKAPEIAINDVVSFLGASYFRAVDSNKQYGLSARGLAIDSYAKRQEEFPDFTKFWFETPDKNATRFVVYALLDSPSATGAYRFDIDCQAGQVVMEIDAHINARTDIQQLGISPMTSMFSCGTHERRMCDTIHPQIHDSDRLSMWRGNGEWICRPLNNPAKPQFSAFADTDPKGFGLVQSDHEFSSYQDTVVWYSRRPSLWVEPITAWGEGEVSLLELPTTGETMDNIVVFWTPKTPVKAGDSMNYGYKLFWSPLPPVSTPLAQVHATRSGMGGFLEGWAPGEHYPKTWARRFAVDFNGGGLDRLPEGTGIEPIVTVTHGKVQDFNILVLPDIKGYRVTFDWVPDSDSVEPVEMRMFIRTGDRTLSETWMYQYFPPAPDRRKYP.

A signal peptide (tat-type signal) is located at residues 1-29 (MNRRNLLKASMALAAYGSVSASGLYAARA).

This sequence belongs to the OpgD/OpgG family. Predicted to be exported by the Tat system. The position of the signal peptide cleavage has not been experimentally proven.

Its subcellular location is the periplasm. It functions in the pathway glycan metabolism; osmoregulated periplasmic glucan (OPG) biosynthesis. Its function is as follows. Probably involved in the control of the structural glucose backbone of osmoregulated periplasmic glucans (OPGs). The protein is Glucans biosynthesis protein D of Pseudomonas savastanoi pv. phaseolicola (strain 1448A / Race 6) (Pseudomonas syringae pv. phaseolicola (strain 1448A / Race 6)).